Here is a 596-residue protein sequence, read N- to C-terminus: Protein NRT1/ PTR FAMILY 3.1 (596 aa).

A compositionally biased stretch (basic and acidic residues) spans 1–16 (MEEQSKNKISEEEKQL). Positions 1-23 (MEEQSKNKISEEEKQLHGRPNRP) are disordered. The next 12 membrane-spanning stretches (helical) occupy residues 27–47 (LITM…VVGF), 73–93 (FAGT…SFAG), 98–118 (ITFA…SAII), 137–157 (TAQL…SGGI), 185–205 (NWYY…LVWI), 213–233 (LGLG…VGGF), 334–354 (MGPI…QGTF), 372–392 (IPAG…IIFY), 416–436 (MGIG…VEVK), 453–473 (IVPI…VAEA), 497–517 (ALFW…VTLV), and 542–562 (YFYW…LWCA).

Belongs to the major facilitator superfamily. Proton-dependent oligopeptide transporter (POT/PTR) (TC 2.A.17) family. As to expression, expressed in shoots, stems, leaves, flowers and siliques.

The protein resides in the membrane. May act as an efflux-type nitrite transporter. Not regulated by the PII protein involved in the regulation of nitrite uptake into higher plant chloroplasts. In Arabidopsis thaliana (Mouse-ear cress), this protein is Protein NRT1/ PTR FAMILY 3.1 (NPF3.1).